The chain runs to 199 residues: Recombination protein RecR (199 aa).

The segment at 56 to 71 adopts a C4-type zinc-finger fold; it reads CSICFNWSAEDPCEIC. The Toprim domain maps to 79 to 174; that stretch reads SLWCVVADVK…TLRMTRLAFG (96 aa).

This sequence belongs to the RecR family.

May play a role in DNA repair. It seems to be involved in an RecBC-independent recombinational process of DNA repair. It may act with RecF and RecO. This chain is Recombination protein RecR, found in Synechococcus sp. (strain JA-2-3B'a(2-13)) (Cyanobacteria bacterium Yellowstone B-Prime).